A 566-amino-acid polypeptide reads, in one-letter code: ATP-dependent RNA helicase DBP3 (566 aa).

The tract at residues 1-139 is disordered; the sequence is MSAGKKHARD…TTPNGSAQRN (139 aa). Over residues 39–58 the composition is skewed to basic residues; that stretch reads DKKKKDKKDKKERKEKKEKK. The segment covering 81-91 has biased composition (basic and acidic residues); sequence SEPKPEKEKKE. The span at 92 to 102 shows a compositional bias: basic residues; that stretch reads KNNKKDKKDKK. The segment covering 127–139 has biased composition (polar residues); it reads AATTTPNGSAQRN. A Q motif motif is present at residues 182 to 209; the sequence is IHFSHLPTSTLTSKKPFASFTAPTPIQA. Residues 212–396 form the Helicase ATP-binding domain; the sequence is WPFALSGRDV…EGFMIDPVKA (185 aa). 225–232 contributes to the ATP binding site; sequence AETGSGKT. Positions 342-345 match the DEAD box motif; it reads DEAD. The 134-residue stretch at 433–566 folds into the Helicase C-terminal domain; that stretch reads GKEQRLLELL…TEHDKSHSGS (134 aa).

It belongs to the DEAD box helicase family. DDX5/DBP2 subfamily.

Its subcellular location is the nucleus. The protein resides in the nucleolus. The enzyme catalyses ATP + H2O = ADP + phosphate + H(+). Its function is as follows. ATP-dependent RNA helicase required for 60S ribosomal subunit synthesis. Involved in efficient pre-rRNA processing, predominantly at site A3, which is necessary for the normal formation of 25S and 5.8S rRNAs. The chain is ATP-dependent RNA helicase DBP3 (DBP3) from Chaetomium globosum (strain ATCC 6205 / CBS 148.51 / DSM 1962 / NBRC 6347 / NRRL 1970) (Soil fungus).